The primary structure comprises 263 residues: Hydroxyethylthiazole kinase (263 aa).

Met45 provides a ligand contact to substrate. ATP contacts are provided by Arg121 and Ser167. Gly194 provides a ligand contact to substrate.

Belongs to the Thz kinase family. It depends on Mg(2+) as a cofactor.

It carries out the reaction 5-(2-hydroxyethyl)-4-methylthiazole + ATP = 4-methyl-5-(2-phosphooxyethyl)-thiazole + ADP + H(+). It functions in the pathway cofactor biosynthesis; thiamine diphosphate biosynthesis; 4-methyl-5-(2-phosphoethyl)-thiazole from 5-(2-hydroxyethyl)-4-methylthiazole: step 1/1. Functionally, catalyzes the phosphorylation of the hydroxyl group of 4-methyl-5-beta-hydroxyethylthiazole (THZ). This chain is Hydroxyethylthiazole kinase, found in Vibrio campbellii (strain ATCC BAA-1116).